Reading from the N-terminus, the 468-residue chain is MKDVRLPTLFEIIIVLGVFLALVLSFTVFLDLPIQLALFVSWFIAMLLGIRLGYSYKDLQNAIVHGISNGLEAVLILVSVGALIGTWIAGGVVPTLIYYGLEFIHPSIFLLATLIICSIMSVATGTSWGTVGTAGIAMIAIGEGLGIPLPLVAGAILSGAYFGDKLSPLSDSTVLASSLSKVDVLAHVRAMLYLSIPAYVITAILFTVVGFMYGGKNIDLDKVEFLKSSLQNTFDIHIWMLIPAVLVIVLLAMKKPSMPVIVIGALLGAIWAVVFQGMDIAHAIATAYNGFSIKTDVEFLNGLLNRGGIVGMLDSLVVIIFGLGFGGLLEKLGVLKVIVSTFEKKLTSAGNVTLSTLIVAFLANIFGCAMYVSLILTPKIMEDSYDRLHLDRRVLSRNSEVGGTLTSGMVPWSDNGIYMAGILGVSTFSYLPFMWLSFVAIGLAIIYGYTGKFIWYTKNNTVKAEKLG.

The next 12 membrane-spanning stretches (helical) occupy residues 9-29 (LFEI…FTVF), 30-50 (LDLP…LLGI), 73-93 (AVLI…GGVV), 96-116 (LIYY…TLII), 136-156 (IAMI…AGAI), 192-212 (LYLS…VGFM), 233-253 (TFDI…LLAM), 258-278 (MPVI…FQGM), 309-329 (IVGM…GGLL), 357-377 (LIVA…LILT), 405-425 (LTSG…ILGV), and 428-448 (FSYL…IIYG).

This sequence belongs to the NhaC Na(+)/H(+) (TC 2.A.35) antiporter family.

The protein resides in the cell membrane. In terms of biological role, couples proton uptake and Na(+) efflux to the substrate-product malate/lactate antiport, in an electroneutral malate-2H(+)/Na(+)-lactate exchange. Plays a role in supporting growth to high density on malate at reduced protonmotive force. This chain is Malate-2H(+)/Na(+)-lactate antiporter (mleN), found in Bacillus subtilis (strain 168).